Here is a 230-residue protein sequence, read N- to C-terminus: Ureidoacrylate amidohydrolase RutB (230 aa).

Aspartate 23 acts as the Proton acceptor in catalysis. Lysine 132 is a catalytic residue. Residue cysteine 165 is the Nucleophile of the active site.

It belongs to the isochorismatase family. RutB subfamily.

It carries out the reaction (Z)-3-ureidoacrylate + H2O + H(+) = (Z)-3-aminoacrylate + NH4(+) + CO2. The enzyme catalyses (Z)-3-ureidoacrylate + H2O = (Z)-3-aminoacrylate + carbamate + H(+). The catalysed reaction is (Z)-2-methylureidoacrylate + H2O + H(+) = (Z)-2-methylaminoacrylate + NH4(+) + CO2. In terms of biological role, hydrolyzes ureidoacrylate to form aminoacrylate and carbamate. The carbamate hydrolyzes spontaneously, thereby releasing one of the nitrogen atoms of the pyrimidine ring as ammonia and one of its carbon atoms as CO2. In Yersinia enterocolitica serotype O:8 / biotype 1B (strain NCTC 13174 / 8081), this protein is Ureidoacrylate amidohydrolase RutB.